Here is a 191-residue protein sequence, read N- to C-terminus: Cell division protein SepF (191 aa).

The tract at residues 21–96 (EVEEPAVASV…NQQPAQEKTT (76 aa)) is disordered. The span at 25–56 (PAVASVKRQQDAAQPASQQQKAQSHQYHQSAS) shows a compositional bias: low complexity. Composition is skewed to polar residues over residues 57-69 (RPSQ…GQNR) and 86-95 (HNQQPAQEKT).

This sequence belongs to the SepF family. As to quaternary structure, homodimer. Interacts with FtsZ.

It is found in the cytoplasm. In terms of biological role, cell division protein that is part of the divisome complex and is recruited early to the Z-ring. Probably stimulates Z-ring formation, perhaps through the cross-linking of FtsZ protofilaments. Its function overlaps with FtsA. The sequence is that of Cell division protein SepF from Streptococcus mutans serotype c (strain ATCC 700610 / UA159).